We begin with the raw amino-acid sequence, 230 residues long: DAG protein, chloroplastic (230 aa).

The transit peptide at 1-55 directs the protein to the chloroplast; the sequence is MATINLSLLPKTLTPNSKTLAPLLSILSTSSLSFLPCTRPHPIKSRSAAYPTVRA. The disordered stretch occupies residues 189-230; that stretch reads PTYQPKQSRSSKYKSKAYVRQRDGPPAEQRRPKQEATPESST. Residues 197-207 are compositionally biased toward basic residues; the sequence is RSSKYKSKAYV. Residues 208 to 224 are compositionally biased toward basic and acidic residues; it reads RQRDGPPAEQRRPKQEA.

Expressed in leaves, flowers including petals, and to a low level in roots.

Its subcellular location is the plastid. The protein resides in the chloroplast. Its function is as follows. Acts very early in chloroplast development, being required for expression of RNA polymerase beta subunit gene, and hence indirectly for subsequent expression of CAB and RBCS genes. This Antirrhinum majus (Garden snapdragon) protein is DAG protein, chloroplastic (DAG).